Reading from the N-terminus, the 134-residue chain is Putative pre-16S rRNA nuclease (134 aa).

The protein belongs to the YqgF nuclease family.

Its subcellular location is the cytoplasm. Functionally, could be a nuclease involved in processing of the 5'-end of pre-16S rRNA. The polypeptide is Putative pre-16S rRNA nuclease (Helicobacter pylori (strain ATCC 700392 / 26695) (Campylobacter pylori)).